Reading from the N-terminus, the 421-residue chain is Imidazolonepropionase (421 aa).

Positions 81 and 83 each coordinate Fe(3+). Positions 81 and 83 each coordinate Zn(2+). The 4-imidazolone-5-propanoate site is built by Arg90, Tyr153, and His186. Residue Tyr153 coordinates N-formimidoyl-L-glutamate. His251 contacts Fe(3+). Residue His251 coordinates Zn(2+). Residue Glu254 participates in 4-imidazolone-5-propanoate binding. Position 326 (Asp326) interacts with Fe(3+). Asp326 is a Zn(2+) binding site. The N-formimidoyl-L-glutamate site is built by Asn328 and Gly330. Ser331 lines the 4-imidazolone-5-propanoate pocket.

The protein belongs to the metallo-dependent hydrolases superfamily. HutI family. It depends on Zn(2+) as a cofactor. The cofactor is Fe(3+).

Its subcellular location is the cytoplasm. It carries out the reaction 4-imidazolone-5-propanoate + H2O = N-formimidoyl-L-glutamate. It functions in the pathway amino-acid degradation; L-histidine degradation into L-glutamate; N-formimidoyl-L-glutamate from L-histidine: step 3/3. Functionally, catalyzes the hydrolytic cleavage of the carbon-nitrogen bond in imidazolone-5-propanoate to yield N-formimidoyl-L-glutamate. It is the third step in the universal histidine degradation pathway. This Streptococcus gordonii (strain Challis / ATCC 35105 / BCRC 15272 / CH1 / DL1 / V288) protein is Imidazolonepropionase.